Here is a 328-residue protein sequence, read N- to C-terminus: D-cysteine desulfhydrase (328 aa).

Lysine 51 carries the post-translational modification N6-(pyridoxal phosphate)lysine.

This sequence belongs to the ACC deaminase/D-cysteine desulfhydrase family. Homodimer. It depends on pyridoxal 5'-phosphate as a cofactor.

The enzyme catalyses D-cysteine + H2O = hydrogen sulfide + pyruvate + NH4(+) + H(+). Functionally, catalyzes the alpha,beta-elimination reaction of D-cysteine and of several D-cysteine derivatives. It could be a defense mechanism against D-cysteine. The chain is D-cysteine desulfhydrase from Escherichia coli O6:H1 (strain CFT073 / ATCC 700928 / UPEC).